The sequence spans 173 residues: Co-chaperone protein HscB homolog (173 aa).

One can recognise a J domain in the interval 5-77 (CHYALFDLQP…PRRARYLLAI (73 aa)).

It belongs to the HscB family. As to quaternary structure, interacts with HscA and stimulates its ATPase activity.

Its function is as follows. Co-chaperone involved in the maturation of iron-sulfur cluster-containing proteins. Seems to help targeting proteins to be folded toward HscA. This Pseudomonas entomophila (strain L48) protein is Co-chaperone protein HscB homolog.